A 752-amino-acid chain; its full sequence is MSSRTALAPGNDRNSDTHGTLGSGRSSDKGPSWSSRSLGARCRNSIASCPEEQPHVGNYRLLRTIGKGNFAKVKLARHILTGREVAIKIIDKTQLNPSSLQKLFREVRIMKGLNHPNIVKLFEVIETEKTLYLVMEYASAGEVFDYLVSHGRMKEKEARAKFRQIVSAVHYCHQKNIVHRDLKAENLLLDAEANIKIADFGFSNEFTLGSKLDTFCGSPPYAAPELFQGKKYDGPEVDIWSLGVILYTLVSGSLPFDGHNLKELRERVLRGKYRVPFYMSTDCESILRRFLVLNPAKRCTLEQIMKDKWINIGYEGEELKPYTEPEEDFGDTKRIEVMVGMGYTREEIKEALTNQKYNEVTATYLLLGRKTEEGGDRGAPGLALARVRAPSDTTNGTSSSKGSSHNKGQRASSSTYHRQRRHSDFCGPSPAPLHPKRSPTSTGDTELKEERMPGRKASCSAVGSGSRGLPPSSPMVSSAHNPNKAEIPERRKDSTSTPNNLPPSMMTRRNTYVCTERPGSERPSLLPNGKENSSGTSRVPPASPSSHSLAPPSGERSRLARGSTIRSTFHGGQVRDRRAGSGSGGGVQNGPPASPTLAHEAAPLPSGRPRPTTNLFTKLTSKLTRRVTDEPERIGGPEVTSCHLPWDKTETAPRLLRFPWSVKLTSSRPPEALMAALRQATAAARCRCRQPQPFLLACLHGGAGGPEPLSHFEVEVCQLPRPGLRGVLFRRVAGTALAFRTLVTRISNDLEL.

Positions 1–36 are disordered; it reads MSSRTALAPGNDRNSDTHGTLGSGRSSDKGPSWSSR. One can recognise a Protein kinase domain in the interval 59 to 310; it reads YRLLRTIGKG…LEQIMKDKWI (252 aa). ATP is bound by residues 65–73 and Lys88; that span reads IGKGNFAKV. Asp181 functions as the Proton acceptor in the catalytic mechanism. Thr214 carries the post-translational modification Phosphothreonine; by LKB1. The region spanning 324–368 is the UBA domain; the sequence is EPEEDFGDTKRIEVMVGMGYTREEIKEALTNQKYNEVTATYLLLG. Residues 385 to 615 are disordered; the sequence is ARVRAPSDTT…SGRPRPTTNL (231 aa). Low complexity predominate over residues 391 to 406; the sequence is SDTTNGTSSSKGSSHN. Phosphoserine is present on residues Ser423 and Ser543. Residues 544–553 are compositionally biased toward low complexity; it reads PSSHSLAPPS. Positions 703 to 752 constitute a KA1 domain; it reads AGGPEPLSHFEVEVCQLPRPGLRGVLFRRVAGTALAFRTLVTRISNDLEL.

The protein belongs to the protein kinase superfamily. CAMK Ser/Thr protein kinase family. SNF1 subfamily. As to quaternary structure, interacts with MAPT/TAU. Interacts with gamma-tubulin. Interacts with ODF2. Interacts with USP9X. Interacts with YWHAQ. Interacts with NLRP3; promoting NLRP3 recruitment to microtubule organizing center (MTOC). Requires Mg(2+) as cofactor. Ubiquitinated with 'Lys-29'- and 'Lys-33'-linked polyubiquitins which appear to impede LKB1-mediated phosphorylation. Deubiquitinated by USP9X. In terms of processing, phosphorylated at Thr-214 by STK11/LKB1 in complex with STE20-related adapter-alpha (STRADA) pseudo kinase and CAB39. Phosphorylated throughout the cell cycle. As to expression, isoform 1 and isoform 2 show similar expression patterns in the central nervous system and are present in the same subsets of neurons including pyramidal and non-pyramidal neurons in the cerebral cortex and hippocampus, cerebellar Purkinje cells, and interneurons and motor neurons in the spinal cord but not in glial cells (at protein level). Isoform 2 is the major isoform in brain and cerebellum. Also expressed in spleen, liver, small intestine, colon, kidney, tongue, testis and lung. Isoform 1 and isoform 2 are expressed at similar levels in heart.

It localises to the cytoplasm. The protein resides in the cytoskeleton. The protein localises to the microtubule organizing center. Its subcellular location is the centrosome. It is found in the cilium axoneme. It localises to the cilium basal body. The protein resides in the cell projection. The protein localises to the dendrite. It carries out the reaction L-seryl-[protein] + ATP = O-phospho-L-seryl-[protein] + ADP + H(+). The enzyme catalyses L-threonyl-[protein] + ATP = O-phospho-L-threonyl-[protein] + ADP + H(+). With respect to regulation, activated by phosphorylation on Thr-214. In terms of biological role, serine/threonine-protein kinase. Phosphorylates the microtubule-associated protein MAPT/TAU. Also phosphorylates the microtubule-associated proteins MAP2 and MAP4. Involved in regulation of the microtubule network, causing reorganization of microtubules into bundles. Required for the initiation of axoneme extension during cilium assembly. Regulates the centrosomal location of ODF2 and phosphorylates ODF2 in vitro. Plays a role in cell cycle progression, specifically in the G1/S checkpoint. Reduces neuronal cell survival. Plays a role in energy homeostasis by regulating satiety and metabolic rate. Promotes adipogenesis by activating JNK1 and inhibiting the p38MAPK pathway, and triggers apoptosis by activating the JNK1 pathway. Phosphorylates mTORC1 complex member RPTOR and acts as a negative regulator of the mTORC1 complex, probably due to disruption of the interaction between phosphorylated RPTOR and the RRAGA/RRAGC heterodimer which is required for mTORC1 activation. Involved in NLRP3 positioning along microtubules by mediating NLRP3 recruitment to microtubule organizing center (MTOC) upon inflammasome activation. This is MAP/microtubule affinity-regulating kinase 4 from Mus musculus (Mouse).